The following is a 264-amino-acid chain: MDMREVYVVAGSFVGFQLFFSCVSPVLSSNFTQGYGKLPPNKLNDWNSRLVSTVHALIVGLFCLYILWYDDAVNEDPVWGDPNLVKLNVAITCGYLFYDLLLLACNWSTMGDVFFVCHHLAALYAYGYVLTRGVLPYFANFRLISELSTPFVNQRWFFEALAYPRTHQLVVANGIAMAVVFFLVRIAVMPPYWAKVFGIIYSPTFEKLGLAIQVAWIISCVCLDILNIIWMYKIARGCYKVITGKLKGRKADSKKTTCVNNHTD.

Transmembrane regions (helical) follow at residues 6–26 (VYVV…VSPV), 50–70 (LVST…LWYD), 84–104 (LVKL…LLLA), 110–130 (MGDV…GYVL), 169–189 (LVVA…IAVM), and 210–230 (LAIQ…NIIW). The TLC domain maps to 41-243 (NKLNDWNSRL…IARGCYKVIT (203 aa)).

The protein belongs to the TLCD4 family.

It localises to the membrane. This is TLC domain-containing protein 4-B (tlcd4b) from Danio rerio (Zebrafish).